We begin with the raw amino-acid sequence, 302 residues long: UDP-3-O-acyl-N-acetylglucosamine deacetylase (302 aa).

Positions 82, 238, and 242 each coordinate Zn(2+). The Proton donor role is filled by histidine 265.

Belongs to the LpxC family. Zn(2+) serves as cofactor.

It catalyses the reaction a UDP-3-O-[(3R)-3-hydroxyacyl]-N-acetyl-alpha-D-glucosamine + H2O = a UDP-3-O-[(3R)-3-hydroxyacyl]-alpha-D-glucosamine + acetate. The protein operates within glycolipid biosynthesis; lipid IV(A) biosynthesis; lipid IV(A) from (3R)-3-hydroxytetradecanoyl-[acyl-carrier-protein] and UDP-N-acetyl-alpha-D-glucosamine: step 2/6. In terms of biological role, catalyzes the hydrolysis of UDP-3-O-myristoyl-N-acetylglucosamine to form UDP-3-O-myristoylglucosamine and acetate, the committed step in lipid A biosynthesis. This chain is UDP-3-O-acyl-N-acetylglucosamine deacetylase, found in Leptospira biflexa serovar Patoc (strain Patoc 1 / Ames).